The sequence spans 360 residues: Phenylalanine--tRNA ligase alpha subunit (360 aa).

Glu260 is a binding site for Mg(2+).

It belongs to the class-II aminoacyl-tRNA synthetase family. Phe-tRNA synthetase alpha subunit type 1 subfamily. In terms of assembly, tetramer of two alpha and two beta subunits. Mg(2+) is required as a cofactor.

The protein localises to the cytoplasm. It catalyses the reaction tRNA(Phe) + L-phenylalanine + ATP = L-phenylalanyl-tRNA(Phe) + AMP + diphosphate + H(+). The protein is Phenylalanine--tRNA ligase alpha subunit of Bradyrhizobium sp. (strain BTAi1 / ATCC BAA-1182).